The sequence spans 427 residues: Tol-Pal system protein TolB (427 aa).

The first 23 residues, 1-23 (MKLLKRLVSVFAIVLAVGSNAFA), serve as a signal peptide directing secretion.

Belongs to the TolB family. In terms of assembly, the Tol-Pal system is composed of five core proteins: the inner membrane proteins TolA, TolQ and TolR, the periplasmic protein TolB and the outer membrane protein Pal. They form a network linking the inner and outer membranes and the peptidoglycan layer.

The protein resides in the periplasm. Part of the Tol-Pal system, which plays a role in outer membrane invagination during cell division and is important for maintaining outer membrane integrity. The polypeptide is Tol-Pal system protein TolB (Haemophilus influenzae (strain ATCC 51907 / DSM 11121 / KW20 / Rd)).